The chain runs to 426 residues: Glutamate-1-semialdehyde 2,1-aminomutase (426 aa).

K265 carries the post-translational modification N6-(pyridoxal phosphate)lysine.

It belongs to the class-III pyridoxal-phosphate-dependent aminotransferase family. HemL subfamily. As to quaternary structure, homodimer. Pyridoxal 5'-phosphate serves as cofactor.

It localises to the cytoplasm. The catalysed reaction is (S)-4-amino-5-oxopentanoate = 5-aminolevulinate. It functions in the pathway porphyrin-containing compound metabolism; protoporphyrin-IX biosynthesis; 5-aminolevulinate from L-glutamyl-tRNA(Glu): step 2/2. In Akkermansia muciniphila (strain ATCC BAA-835 / DSM 22959 / JCM 33894 / BCRC 81048 / CCUG 64013 / CIP 107961 / Muc), this protein is Glutamate-1-semialdehyde 2,1-aminomutase.